A 25-amino-acid chain; its full sequence is GFLDVVHVGKAVGKAALNAVNDLVN.

Position 25 is an asparagine amide (N25).

In terms of tissue distribution, expressed by the skin glands.

Its subcellular location is the secreted. Has antimicrobial activity. This is Cruzioseptin-13 from Cruziohyla calcarifer (Splendid leaf frog).